The following is an 816-amino-acid chain: Leucine--tRNA ligase (816 aa).

The 'HIGH' region motif lies at 40 to 51 (SYPSGSQLHAGH). The 'KMSKS' region signature appears at 576 to 580 (KMSKS). Residue Lys-579 participates in ATP binding.

Belongs to the class-I aminoacyl-tRNA synthetase family.

Its subcellular location is the cytoplasm. The enzyme catalyses tRNA(Leu) + L-leucine + ATP = L-leucyl-tRNA(Leu) + AMP + diphosphate. This chain is Leucine--tRNA ligase, found in Clostridium perfringens (strain 13 / Type A).